We begin with the raw amino-acid sequence, 238 residues long: Cysteine-rich venom protein pseudecin (238 aa).

Residues 1 to 19 form the signal peptide; that stretch reads MIAFIVLLSLAAVLQQSSG. A propeptide spanning residues 20 to 28 is cleaved from the precursor; sequence TVDFASESS. In terms of domain architecture, SCP spans 38-164; it reads VDKHNALRRS…SSKYLYVCQY (127 aa). Residues threonine 51 and serine 106 each contribute to the Zn(2+) site. 8 cysteine pairs are disulfide-bonded: cysteine 75–cysteine 153, cysteine 92–cysteine 165, cysteine 148–cysteine 162, cysteine 184–cysteine 191, cysteine 187–cysteine 196, cysteine 200–cysteine 233, cysteine 209–cysteine 227, and cysteine 218–cysteine 231. In terms of domain architecture, ShKT spans 200-233; it reads CNYNNDFSNCKSLAKKSKCQTEWIKKKCPASCFC.

In terms of tissue distribution, expressed by the venom gland.

Its subcellular location is the secreted. In terms of biological role, blocks olfactory (CNGA2) and retinal (CNGA1) CNG channel currents. Is really less potent that Pseudechetoxin. Does not affect neither depolarization- nor caffeine-induced contraction of smooth muscle. The sequence is that of Cysteine-rich venom protein pseudecin from Pseudechis porphyriacus (Red-bellied black snake).